The primary structure comprises 254 residues: Uridylate kinase (254 aa).

Position 9-12 (9-12 (KLSG)) interacts with ATP. Position 51 (G51) interacts with UMP. ATP-binding residues include G52 and R56. Residues D72 and 133-140 (SGNPFFTT) each bind UMP. Positions 160, 166, and 169 each coordinate ATP.

The protein belongs to the UMP kinase family. Homohexamer.

It is found in the cytoplasm. The enzyme catalyses UMP + ATP = UDP + ADP. Its pathway is pyrimidine metabolism; CTP biosynthesis via de novo pathway; UDP from UMP (UMPK route): step 1/1. Inhibited by UTP. Functionally, catalyzes the reversible phosphorylation of UMP to UDP. In Synechococcus sp. (strain JA-3-3Ab) (Cyanobacteria bacterium Yellowstone A-Prime), this protein is Uridylate kinase.